The chain runs to 595 residues: Adenine deaminase (595 aa).

Belongs to the metallo-dependent hydrolases superfamily. Adenine deaminase family. Homodimer. Mn(2+) serves as cofactor.

It carries out the reaction adenine + H2O + H(+) = hypoxanthine + NH4(+). This chain is Adenine deaminase, found in Serratia proteamaculans (strain 568).